The following is a 282-amino-acid chain: MTDRYAVFGNPISHSKSPFIHGQFAAPTQESLTYEAILAPVDGFEASLTAFFNAGGKGANVTVPFKEQAFALCDSISPEAKLAGAVNTLSLLADGTIRGDNTDGLGLVADLIANLGSLQDQRVLLIGAGGAARGCILPLLNAGIAQLTISNRTHTKAQLLVDIFTSVDNGAYVSKVTAVEMSELAGEFDIIINSTSASLAGELPPLPAHIITTQTVCYDMMYGASVTAFNQWALSQGAAKVIDGLGMLVGQAAKSFTLWRGIEPDTQVVLTLLRDKLMAEPK.

Residues 15-17 and threonine 62 each bind shikimate; that span reads SKS. The active-site Proton acceptor is the lysine 66. The shikimate site is built by asparagine 87 and aspartate 103. Residues 127 to 131, 151 to 156, and methionine 220 each bind NADP(+); these read GAGGA and NRTHTK. Tyrosine 222 is a binding site for shikimate. Position 244 (glycine 244) interacts with NADP(+).

The protein belongs to the shikimate dehydrogenase family. In terms of assembly, homodimer.

It carries out the reaction shikimate + NADP(+) = 3-dehydroshikimate + NADPH + H(+). The protein operates within metabolic intermediate biosynthesis; chorismate biosynthesis; chorismate from D-erythrose 4-phosphate and phosphoenolpyruvate: step 4/7. In terms of biological role, involved in the biosynthesis of the chorismate, which leads to the biosynthesis of aromatic amino acids. Catalyzes the reversible NADPH linked reduction of 3-dehydroshikimate (DHSA) to yield shikimate (SA). The chain is Shikimate dehydrogenase (NADP(+)) from Shewanella baltica (strain OS185).